Consider the following 164-residue polypeptide: Galectin-3 (164 aa).

Residues 9–154 form the Galectin domain; that stretch reads STVDLSEPLK…FSDVLGVTVL (146 aa). A carbohydrate is bound by residues N45, R64, N73, R81, E84, and N138.

In terms of assembly, homotetramer. Oligomerization is required for carbohydrate binding.

It localises to the secreted. The protein localises to the extracellular space. It is found in the extracellular matrix. The protein resides in the cell wall. Binds complex carbohydrates, such as chitooligosaccharides. Does not bind lactose. May play a role in fruiting body formation. In Coprinopsis cinerea (Inky cap fungus), this protein is Galectin-3 (Cgl3).